The chain runs to 364 residues: UDP-N-acetylglucosamine--N-acetylmuramyl-(pentapeptide) pyrophosphoryl-undecaprenol N-acetylglucosamine transferase (364 aa).

UDP-N-acetyl-alpha-D-glucosamine contacts are provided by residues 10–12, Asn124, Arg166, Ser196, and Gln297; that span reads TGG.

Belongs to the glycosyltransferase 28 family. MurG subfamily.

Its subcellular location is the cell membrane. It catalyses the reaction di-trans,octa-cis-undecaprenyl diphospho-N-acetyl-alpha-D-muramoyl-L-alanyl-D-glutamyl-meso-2,6-diaminopimeloyl-D-alanyl-D-alanine + UDP-N-acetyl-alpha-D-glucosamine = di-trans,octa-cis-undecaprenyl diphospho-[N-acetyl-alpha-D-glucosaminyl-(1-&gt;4)]-N-acetyl-alpha-D-muramoyl-L-alanyl-D-glutamyl-meso-2,6-diaminopimeloyl-D-alanyl-D-alanine + UDP + H(+). It functions in the pathway cell wall biogenesis; peptidoglycan biosynthesis. Cell wall formation. Catalyzes the transfer of a GlcNAc subunit on undecaprenyl-pyrophosphoryl-MurNAc-pentapeptide (lipid intermediate I) to form undecaprenyl-pyrophosphoryl-MurNAc-(pentapeptide)GlcNAc (lipid intermediate II). The protein is UDP-N-acetylglucosamine--N-acetylmuramyl-(pentapeptide) pyrophosphoryl-undecaprenol N-acetylglucosamine transferase of Thermoanaerobacter pseudethanolicus (strain ATCC 33223 / 39E) (Clostridium thermohydrosulfuricum).